A 525-amino-acid chain; its full sequence is GMP synthase [glutamine-hydrolyzing] (525 aa).

Positions 9 to 207 constitute a Glutamine amidotransferase type-1 domain; it reads RILILDFGSQ…VRDICQCEAL (199 aa). C86 serves as the catalytic Nucleophile. Residues H181 and E183 contribute to the active site. The GMPS ATP-PPase domain maps to 208–400; that stretch reads WTPAKIIDDA…LGLPYDMLYR (193 aa). 235 to 241 serves as a coordination point for ATP; it reads SGGVDSS.

As to quaternary structure, homodimer.

The enzyme catalyses XMP + L-glutamine + ATP + H2O = GMP + L-glutamate + AMP + diphosphate + 2 H(+). It participates in purine metabolism; GMP biosynthesis; GMP from XMP (L-Gln route): step 1/1. Its function is as follows. Catalyzes the synthesis of GMP from XMP. This Citrobacter koseri (strain ATCC BAA-895 / CDC 4225-83 / SGSC4696) protein is GMP synthase [glutamine-hydrolyzing].